Consider the following 755-residue polypeptide: Serine/threonine-protein kinase GL21140 (755 aa).

The segment covering 18–52 (QASASGSGTPKKTAASSAAAQNSKQLLDQLSQQQK) has biased composition (low complexity). The interval 18–128 (QASASGSGTP…GSANTNGSAS (111 aa)) is disordered. Basic and acidic residues-rich tracts occupy residues 53 to 66 (AQEEAETHSRRDCD) and 74 to 84 (EPEKDLDELRD). A compositionally biased stretch (polar residues) spans 87-99 (GSLTGSGSVGKSN). Positions 100–128 (GSLSGASSTTSAPAGTSTPGSANTNGSAS) are enriched in low complexity. 2 Doublecortin domains span residues 157-243 (HRIK…VDYN) and 314-397 (RIVT…VDDF). The Protein kinase domain maps to 484 to 742 (YTLSQIIGDG…SEDILDHYWT (259 aa)). Residues 490 to 498 (IGDGNFAIV) and K513 each bind ATP. D605 acts as the Proton acceptor in catalysis.

The protein belongs to the protein kinase superfamily. CAMK Ser/Thr protein kinase family. CaMK subfamily.

The catalysed reaction is L-seryl-[protein] + ATP = O-phospho-L-seryl-[protein] + ADP + H(+). The enzyme catalyses L-threonyl-[protein] + ATP = O-phospho-L-threonyl-[protein] + ADP + H(+). In Drosophila persimilis (Fruit fly), this protein is Serine/threonine-protein kinase GL21140.